The chain runs to 415 residues: Diaminopimelate decarboxylase (415 aa).

Lys-54 is subject to N6-(pyridoxal phosphate)lysine. Pyridoxal 5'-phosphate-binding positions include Gly-223 and 264–267 (EPGR). Substrate contacts are provided by Arg-267, Arg-303, and Tyr-307. The active-site Proton donor is the Cys-338. Substrate contacts are provided by Glu-339 and Tyr-374. Tyr-374 is a pyridoxal 5'-phosphate binding site.

The protein belongs to the Orn/Lys/Arg decarboxylase class-II family. LysA subfamily. As to quaternary structure, homodimer. It depends on pyridoxal 5'-phosphate as a cofactor.

It carries out the reaction meso-2,6-diaminopimelate + H(+) = L-lysine + CO2. It participates in amino-acid biosynthesis; L-lysine biosynthesis via DAP pathway; L-lysine from DL-2,6-diaminopimelate: step 1/1. Specifically catalyzes the decarboxylation of meso-diaminopimelate (meso-DAP) to L-lysine. In Buchnera aphidicola subsp. Schizaphis graminum (strain Sg), this protein is Diaminopimelate decarboxylase.